Reading from the N-terminus, the 440-residue chain is MLERYANEEMKALWNEQTKFETYLEVEKAVVRAWNKLGQIQDSDCEKICLKAAFNLERIKEIEKTTKHDLIAFTTCVAESLGEESRFFHYGITSSDCIDTAMALLMTKSLKLIQKGVKNLYETLKNRALEHQDTLMVGRSHGVFGEPITFGLVLALFADEIKRHLKALDLTMEFISVGAISGAMGNFAHAPLELEELACGFLGLKTANISNQVIQRDRYARLACDLALLASSCEKIAVNIRHLQRSEVYEVEEAFSAGQKGSSAMPHKRNPILSENITGLCRVIRSFTTPMLENVALWHERDMSHSSVERFALPDLFITSDFMLSRLNSVIENLVVYPKNMLKNLALSGGLVFSQRVLLELPKKGLSREESYSIVQENAMKIWEVLQQGAFKNADENLFLNALLNDERLKKYLNESEIRACFDYSYYTKNVGAIFKRVFG.

Residues 4 to 5 (RY), 67 to 69 (KHD), and 93 to 94 (TS) contribute to the N(6)-(1,2-dicarboxyethyl)-AMP site. His-141 serves as the catalytic Proton donor/acceptor. Gln-212 contributes to the N(6)-(1,2-dicarboxyethyl)-AMP binding site. Ser-262 (proton donor/acceptor) is an active-site residue. N(6)-(1,2-dicarboxyethyl)-AMP-binding positions include Ser-263, 268 to 270 (KRN), Asn-276, and 307 to 311 (SVERF).

It belongs to the lyase 1 family. Adenylosuccinate lyase subfamily. In terms of assembly, homotetramer. Residues from neighboring subunits contribute catalytic and substrate-binding residues to each active site.

It carries out the reaction N(6)-(1,2-dicarboxyethyl)-AMP = fumarate + AMP. The catalysed reaction is (2S)-2-[5-amino-1-(5-phospho-beta-D-ribosyl)imidazole-4-carboxamido]succinate = 5-amino-1-(5-phospho-beta-D-ribosyl)imidazole-4-carboxamide + fumarate. Its pathway is purine metabolism; AMP biosynthesis via de novo pathway; AMP from IMP: step 2/2. It functions in the pathway purine metabolism; IMP biosynthesis via de novo pathway; 5-amino-1-(5-phospho-D-ribosyl)imidazole-4-carboxamide from 5-amino-1-(5-phospho-D-ribosyl)imidazole-4-carboxylate: step 2/2. Its function is as follows. Catalyzes two reactions in de novo purine nucleotide biosynthesis. Catalyzes the breakdown of 5-aminoimidazole- (N-succinylocarboxamide) ribotide (SAICAR or 2-[5-amino-1-(5-phospho-beta-D-ribosyl)imidazole-4-carboxamido]succinate) to 5-aminoimidazole-4-carboxamide ribotide (AICAR or 5-amino-1-(5-phospho-beta-D-ribosyl)imidazole-4-carboxamide) and fumarate, and of adenylosuccinate (ADS or N(6)-(1,2-dicarboxyethyl)-AMP) to adenosine monophosphate (AMP) and fumarate. This Helicobacter pylori (strain J99 / ATCC 700824) (Campylobacter pylori J99) protein is Adenylosuccinate lyase (purB).